Reading from the N-terminus, the 945-residue chain is Splicing factor, suppressor of white-apricot homolog (945 aa).

Disordered regions lie at residues 1–28 (MYGA…GTGT) and 157–190 (YYDP…PFIA). 2 stretches are compositionally biased toward basic and acidic residues: residues 9 to 21 (AKAE…KEEA) and 169 to 178 (PSKQREKSEA). The stretch at 211 to 253 (IIERTANFVCKQGAQFEIMLKAKQARNSQFDFLRFDHYLNPYY) is one SURP motif 1 repeat. The segment at 269–298 (AESKSEEKKKSGPTSDNEEEDDEEDGSYLH) is disordered. Ser-283 is subject to Phosphoserine. Positions 284-294 (DNEEEDDEEDG) are enriched in acidic residues. An N6-acetyllysine modification is found at Lys-315. Disordered regions lie at residues 332–355 (KAQA…PSQV) and 403–438 (SSSP…STTT). A compositionally biased stretch (low complexity) spans 335-352 (ADSSAPAPPTADGTPAQP). Residues 412–425 (VPPPPGTTPPPPPT) show a composition bias toward pro residues. A compositionally biased stretch (low complexity) spans 426 to 438 (TAESSSGVTSTTT). One copy of the SURP motif 2 repeat lies at 458–498 (VIDKLAEYVARNGLKFETSVRAKNDQRFEFLQPWHQYNAYY). 3 disordered regions span residues 512 to 566 (GSTQ…TVDG), 589 to 680 (PLEK…QAER), and 714 to 921 (GVMP…VQSK). Low complexity predominate over residues 514–527 (TQAASTAEEAPTET). The segment covering 528–540 (AVEESSEAGEDGA) has biased composition (acidic residues). Residues 589 to 598 (PLEKNRVKLD) are compositionally biased toward basic and acidic residues. Ser-601 and Ser-621 each carry phosphoserine. Residues 615-630 (SSVANPSPAAAPPSAV) are compositionally biased toward low complexity. Residues 632–686 (EEKKPQLTQEELEAKQAKQKLEDRLAAAAREKLAQASKESKEKQLQAERKRKAAL) are a coiled coil. Thr-639 bears the Phosphothreonine mark. Composition is skewed to basic and acidic residues over residues 643-679 (LEAK…LQAE) and 733-752 (KPPE…EERE). Basic residues-rich tracts occupy residues 753-787 (KKKK…KAKH) and 795-810 (TVRR…RRRA). The span at 811–821 (HSPERRREDRS) shows a compositional bias: basic and acidic residues. 2 positions are modified to phosphoserine: Ser-829 and Ser-831. The segment covering 835 to 861 (SRKRTRSRSPHEKKKKRRSRSRTKAKA) has biased composition (basic residues). Low complexity predominate over residues 871-894 (QAAQRPSAHSAHSASISPVESRGS). Residues 895-908 (SQERSRGVSQEKDG) show a composition bias toward basic and acidic residues. Ser-899 and Ser-903 each carry phosphoserine. Residues 909–920 (QISSAIVSSVQS) show a composition bias toward low complexity.

It is found in the nucleus. Plays a role as an alternative splicing regulator. Regulate its own expression at the level of RNA processing. Also regulates the splicing of fibronectin and CD45 genes. May act, at least in part, by interaction with other R/S-containing splicing factors. Represses the splicing of MAPT/Tau exon 10. In Rattus norvegicus (Rat), this protein is Splicing factor, suppressor of white-apricot homolog (Sfswap).